Reading from the N-terminus, the 345-residue chain is Biotin synthase (345 aa).

The Radical SAM core domain occupies Arg38 to Ser256. Residues Cys53, Cys57, and Cys60 each coordinate [4Fe-4S] cluster. The [2Fe-2S] cluster site is built by Cys97, Cys128, Cys188, and Arg260.

Belongs to the radical SAM superfamily. Biotin synthase family. As to quaternary structure, homodimer. It depends on [4Fe-4S] cluster as a cofactor. [2Fe-2S] cluster is required as a cofactor.

It carries out the reaction (4R,5S)-dethiobiotin + (sulfur carrier)-SH + 2 reduced [2Fe-2S]-[ferredoxin] + 2 S-adenosyl-L-methionine = (sulfur carrier)-H + biotin + 2 5'-deoxyadenosine + 2 L-methionine + 2 oxidized [2Fe-2S]-[ferredoxin]. The protein operates within cofactor biosynthesis; biotin biosynthesis; biotin from 7,8-diaminononanoate: step 2/2. Catalyzes the conversion of dethiobiotin (DTB) to biotin by the insertion of a sulfur atom into dethiobiotin via a radical-based mechanism. This is Biotin synthase from Yersinia pseudotuberculosis serotype O:1b (strain IP 31758).